We begin with the raw amino-acid sequence, 296 residues long: Putative F-box protein At1g67623 (296 aa).

An F-box domain is found at 21–70 (SLCLDSLPEDLLVEISSCTGASSLSAVRNLRLVSKSFRRICDEKYVFYRL).

This chain is Putative F-box protein At1g67623, found in Arabidopsis thaliana (Mouse-ear cress).